The sequence spans 518 residues: UPF0053 inner membrane protein YoaE (518 aa).

Residues 1–13 (MEFLMDPSIWAGL) are Cytoplasmic-facing. A helical transmembrane segment spans residues 14–34 (LTLVVLEIVLGIDNLVFIAIL). Residues 35 to 48 (ADKLPPKQRDKARL) are Periplasmic-facing. Residues 49–69 (LGLSLALIMRLGLLSLISWMV) form a helical membrane-spanning segment. Residues 70–78 (TLTKPLFTV) are Cytoplasmic-facing. The helical transmembrane segment at 79–99 (MDFSFSGRDLIMLFGGIFLLF) threads the bilayer. Topologically, residues 100–124 (KATTELHERLENRDHDSGHGKGYAS) are periplasmic. Residues 125 to 145 (FWVVVTQIVILDAVFSLDAVI) traverse the membrane as a helical segment. Topologically, residues 146 to 149 (TAVG) are cytoplasmic. A helical transmembrane segment spans residues 150-170 (MVNHLPVMMAAVVIAMAVMLL). At 171 to 184 (ASKPLTRFVNQHPT) the chain is on the periplasmic side. The helical transmembrane segment at 185–205 (VVVLCLSFLLMIGLSLVAEGF) threads the bilayer. Residue G206 is a topological domain, cytoplasmic. Residues 207-227 (FHIPKGYLYAAIGFSIIIEVF) traverse the membrane as a helical segment. Residues 228–354 (NQIARRNFIR…IGIVRAKELL (127 aa)) are Periplasmic-facing. CBS domains follow at residues 304 to 363 (MTPR…GVDV) and 367 to 427 (ASAS…DADE). A helical membrane pass occupies residues 355–375 (VALEEGVDVAAIASASPAIIV). Topologically, residues 376–518 (PETLDPINLL…KEQPAHDEDE (143 aa)) are cytoplasmic.

It belongs to the UPF0053 family.

It localises to the cell inner membrane. This chain is UPF0053 inner membrane protein YoaE (yoaE), found in Escherichia coli O157:H7.